A 312-amino-acid chain; its full sequence is Ribosomal protein L11 methyltransferase (312 aa).

The S-adenosyl-L-methionine site is built by Thr-162, Gly-183, Asp-205, and Asn-248.

The protein belongs to the methyltransferase superfamily. PrmA family.

Its subcellular location is the cytoplasm. It carries out the reaction L-lysyl-[protein] + 3 S-adenosyl-L-methionine = N(6),N(6),N(6)-trimethyl-L-lysyl-[protein] + 3 S-adenosyl-L-homocysteine + 3 H(+). Its function is as follows. Methylates ribosomal protein L11. The polypeptide is Ribosomal protein L11 methyltransferase (Bacillus cereus (strain G9842)).